The sequence spans 400 residues: MTQFASPVLHSLLDTDAYKLHMQQAVFHHYYDVHVAAEFRCRGDDLLGIYADAIREQVQAMQHLRLQDDEYQWLSALPFFQADYLNWLREFRFNPEQVTVSNDNGKLDIRLSGPWREVILWEVPLLAVISEMVHRYRSPQTDVAQALDTLESKLVDFSALTAGLDMSRFHLMDFGTRRRFSREVQETIVKRLQQESWFVGTSNYDLARRLSLTPMGTQAHEWFQAHQQISPDLANSQRAALAAWLEEYPDQLGIALTDCITMDAFLRDFGVEFASRYQGLRHDSGDPVEWGEKAIAHYEKLGIDPQSKTLVFSDNLDLRKAVELYRHFSSRVQLSFGIGTRLTCDIPQVKPLNIVIKLVECNGKPVAKLSDSPGKTICHDKAFVRALRKAFDLPHIKKAS.

The residue at position 220 (histidine 220) is a Phosphohistidine; by autocatalysis.

This sequence belongs to the NAPRTase family. In terms of processing, transiently phosphorylated on a His residue during the reaction cycle. Phosphorylation strongly increases the affinity for substrates and increases the rate of nicotinate D-ribonucleotide production. Dephosphorylation regenerates the low-affinity form of the enzyme, leading to product release.

The enzyme catalyses nicotinate + 5-phospho-alpha-D-ribose 1-diphosphate + ATP + H2O = nicotinate beta-D-ribonucleotide + ADP + phosphate + diphosphate. It participates in cofactor biosynthesis; NAD(+) biosynthesis; nicotinate D-ribonucleotide from nicotinate: step 1/1. Catalyzes the synthesis of beta-nicotinate D-ribonucleotide from nicotinate and 5-phospho-D-ribose 1-phosphate at the expense of ATP. The polypeptide is Nicotinate phosphoribosyltransferase (Escherichia coli O7:K1 (strain IAI39 / ExPEC)).